Consider the following 714-residue polypeptide: MEMTSAFTLNVRLDNIAVITIDVPGEKMNTLKAEFASQVRAIIKQLRENKELRGVVFVSAKPDNFIAGADINMIGNCKTAQEAEALARQGQQLMAEIHALPIPVIAAIHGACLGGGLELALACHGRVCTDDPKTVLGLPEVQLGLLPGSGGTQRLPRLIGVSTALEMILTGKQLRAKQALKLGLVDDVVPHSILLEVAVELAKKDRPSSRPLPVRERILAGPLGRALLFKMVGKKTEHKTQGNYPATERILEVVETGLAQGTSSGYDAEARAFGELAMTPQSQALRSIFFASTDVKKDPGSDAPPAPLNSVGILGGGLMGGGIAYVTACKVGLPVRIKDINPQGINHALKYSWDQLEGKVRRRHLKASERDKQLALISGTTDYRGFAHRDLIIEAVFENLELKQQMVAEVEQNSAAHTIFASNTSSLPIGDIAAHATRPEQVIGLHFFSPVEKMPLVEIIPHAGTSAQTIATTVKLAKKQGKTPIVVRDKAGFYVNRILAPYINEAIRMLTEGERVEHIDAVLVKFGFPVGPIQLLDEVGIDTGTKIIPVLEAAYGERFSAPANVVSSILNDDRKGRKNGRGFYLYGQKGRKSKKQVDPAIYPLIGAQGQGRLSAPQVAERCVMLMLNEAVRCVDEQVIRSVRDGDIGAVFGIGFPPFLGGPFRYIDSLGAGEVVAIMQRLATQYGSRFTPCERLVEMGARGESFWKTTATDLQ.

Residues 1–190 form an enoyl-CoA hydratase region; it reads MEMTSAFTLN…KLGLVDDVVP (190 aa). The 3-hydroxyacyl-CoA dehydrogenase stretch occupies residues 306-714; sequence APLNSVGILG…FWKTTATDLQ (409 aa).

It in the N-terminal section; belongs to the enoyl-CoA hydratase/isomerase family. This sequence in the central section; belongs to the 3-hydroxyacyl-CoA dehydrogenase family. In terms of assembly, heterotetramer of two alpha chains (FadJ) and two beta chains (FadI).

The protein resides in the cytoplasm. The catalysed reaction is a (3S)-3-hydroxyacyl-CoA = a (2E)-enoyl-CoA + H2O. It carries out the reaction a 4-saturated-(3S)-3-hydroxyacyl-CoA = a (3E)-enoyl-CoA + H2O. It catalyses the reaction a (3S)-3-hydroxyacyl-CoA + NAD(+) = a 3-oxoacyl-CoA + NADH + H(+). The enzyme catalyses (3S)-3-hydroxybutanoyl-CoA = (3R)-3-hydroxybutanoyl-CoA. Its pathway is lipid metabolism; fatty acid beta-oxidation. Catalyzes the formation of a hydroxyacyl-CoA by addition of water on enoyl-CoA. Also exhibits 3-hydroxyacyl-CoA epimerase and 3-hydroxyacyl-CoA dehydrogenase activities. This Escherichia coli (strain 55989 / EAEC) protein is Fatty acid oxidation complex subunit alpha.